Here is a 201-residue protein sequence, read N- to C-terminus: TATA-box-binding protein 2 (201 aa).

Repeat copies occupy residues 26–102 (LQNI…ARII) and 116–193 (IQNI…YPVL).

It belongs to the TBP family. As to quaternary structure, belongs to the TFIID complex together with the TBP-associated factors (TAFs). Binds DNA as monomer.

It localises to the nucleus. In terms of biological role, general transcription factor that functions at the core of the DNA-binding multiprotein factor TFIID. Binding of TFIID to the TATA box is the initial transcriptional step of the pre-initiation complex (PIC), playing a role in the activation of eukaryotic genes transcribed by RNA polymerase II. This is TATA-box-binding protein 2 (TBP2) from Triticum aestivum (Wheat).